The primary structure comprises 330 residues: uncharacterized protein (330 aa).

Residues 4-242 (LSIQNLVVEY…AGEVLFEQST (239 aa)) enclose the ABC transporter domain. 40-47 (GPSGCGKT) contacts ATP. A nucleoside 3',5'-cyclic phosphate is bound at residue 210–330 (DRVVELTPDF…LIEHRALAND (121 aa)).

It belongs to the ABC transporter superfamily. As to quaternary structure, the complex is composed of two ATP-binding proteins (MT0079), two transmembrane proteins (MT0078) and a solute-binding protein.

Its function is as follows. Probably part of an ABC transporter complex. Probably responsible for energy coupling to the transport system. This is an uncharacterized protein from Mycobacterium tuberculosis (strain CDC 1551 / Oshkosh).